A 129-amino-acid polypeptide reads, in one-letter code: Omega-scoloptoxin(05)-Ssm1a (129 aa).

The first 24 residues, 1–24, serve as a signal peptide directing secretion; that stretch reads MPSLCIIALFGTLTFYTLIPSIHT. The propeptide occupies 25 to 46; that stretch reads LKCVRCDGPMSNYDCKTTYPAA.

The protein belongs to the scoloptoxin-05 family. In terms of processing, contains 3 disulfide bonds. Expressed by the venom gland.

The protein localises to the secreted. Toxin that increase voltage-gated calcium channel (Cav) currents in DRG neurons by 70% and 120%, when 1 uM and 10 uM are tested, respectively. This chain is Omega-scoloptoxin(05)-Ssm1a, found in Scolopendra mutilans (Chinese red-headed centipede).